We begin with the raw amino-acid sequence, 89 residues long: Small ribosomal subunit protein bS20 (89 aa).

Residues 1–21 (MANSAQAKKRARQNVKARKHN) are disordered. Positions 7–21 (AKKRARQNVKARKHN) are enriched in basic residues.

The protein belongs to the bacterial ribosomal protein bS20 family.

Binds directly to 16S ribosomal RNA. The sequence is that of Small ribosomal subunit protein bS20 from Acinetobacter baylyi (strain ATCC 33305 / BD413 / ADP1).